The primary structure comprises 379 residues: MGDWSALGRLLDKVQAYSTAGGKVWLSVLFIFRILLLGTAVESAWGDEQSAFVCNTQQPGCENVCYDKSFPISHVRFWVLQIIFVSTPTLLYLAHVFYLMRKEEKLNRKEEELKMVQNEGGNVDMHLKQIEIKKFKYGLEEHGKVKMRGGLLRTYIISILFKSVFEVGFIIIQWYMYGFSLSAIYTCKRDPCPHQVDCFLSRPTEKTIFIWFMLIVSIVSLALNIIELFYVTYKSIKDGIKGKKDPFSATNDAVISGKECGSPKYAYFNGCSSPTAPMSPPGYKLVTGERNPSSCRNYNKQASEQNWANYSAEQNRMGQAGSTISNTHAQPFDFSDEHQNTKKMAPGHEMQPLTILDQRPSSRASSHASSRPRPDDLEI.

The Cytoplasmic portion of the chain corresponds to 2 to 23; it reads GDWSALGRLLDKVQAYSTAGGK. Residues 24–44 traverse the membrane as a helical segment; it reads VWLSVLFIFRILLLGTAVESA. The Extracellular segment spans residues 45–76; the sequence is WGDEQSAFVCNTQQPGCENVCYDKSFPISHVR. 2 cysteine pairs are disulfide-bonded: C54–C192 and C187–C198. The helical transmembrane segment at 77 to 97 threads the bilayer; it reads FWVLQIIFVSTPTLLYLAHVF. Residues 98-163 lie on the Cytoplasmic side of the membrane; that stretch reads YLMRKEEKLN…TYIISILFKS (66 aa). Residues 164–184 traverse the membrane as a helical segment; that stretch reads VFEVGFIIIQWYMYGFSLSAI. At 185–207 the chain is on the extracellular side; it reads YTCKRDPCPHQVDCFLSRPTEKT. Residues 208 to 228 traverse the membrane as a helical segment; it reads IFIWFMLIVSIVSLALNIIEL. Residues 229–379 lie on the Cytoplasmic side of the membrane; it reads FYVTYKSIKD…SRPRPDDLEI (151 aa). The segment at 322 to 379 is disordered; sequence STISNTHAQPFDFSDEHQNTKKMAPGHEMQPLTILDQRPSSRASSHASSRPRPDDLEI. Positions 359–371 are enriched in low complexity; it reads RPSSRASSHASSR.

This sequence belongs to the connexin family. Alpha-type (group II) subfamily. As to quaternary structure, a connexon is composed of a hexamer of connexins. Interacts with TMEM65. In terms of tissue distribution, expressed in most tissues. Highest levels found in eye and brain.

It localises to the cell membrane. The protein localises to the cell junction. Its subcellular location is the gap junction. Its function is as follows. One gap junction consists of a cluster of closely packed pairs of transmembrane channels, the connexons, through which materials of low MW diffuse from one cell to a neighboring cell. Plays an essential role in gap junction communication in the ventricles. The protein is Gap junction alpha-1 protein (gja1) of Xenopus laevis (African clawed frog).